A 91-amino-acid polypeptide reads, in one-letter code: RNA-binding protein Hfq (91 aa).

Residues 9-68 enclose the Sm domain; sequence DPYLNALRRERIPVSIYLVNGIKLQGQIESFDQFVILLKNTVNQMVYKHAISTVVPARSV. Residues 69 to 91 form a disordered region; the sequence is SHHNNNHHTAPTEAVENVETQAE.

This sequence belongs to the Hfq family. Homohexamer.

RNA chaperone that binds small regulatory RNA (sRNAs) and mRNAs to facilitate mRNA translational regulation in response to envelope stress, environmental stress and changes in metabolite concentrations. Also binds with high specificity to tRNAs. This Haemophilus influenzae (strain ATCC 51907 / DSM 11121 / KW20 / Rd) protein is RNA-binding protein Hfq.